The primary structure comprises 125 residues: Holo-[acyl-carrier-protein] synthase (125 aa).

Residues aspartate 8 and glutamate 57 each contribute to the Mg(2+) site.

The protein belongs to the P-Pant transferase superfamily. AcpS family. Mg(2+) serves as cofactor.

The protein localises to the cytoplasm. The catalysed reaction is apo-[ACP] + CoA = holo-[ACP] + adenosine 3',5'-bisphosphate + H(+). In terms of biological role, transfers the 4'-phosphopantetheine moiety from coenzyme A to a Ser of acyl-carrier-protein. The polypeptide is Holo-[acyl-carrier-protein] synthase (Dechloromonas aromatica (strain RCB)).